A 64-amino-acid polypeptide reads, in one-letter code: Bowman-Birk type trypsin inhibitor TI1 (64 aa).

5 disulfides stabilise this stretch: cysteine 9/cysteine 61, cysteine 10/cysteine 25, cysteine 15/cysteine 23, cysteine 32/cysteine 39, and cysteine 36/cysteine 49.

Belongs to the Bowman-Birk serine protease inhibitor family.

The polypeptide is Bowman-Birk type trypsin inhibitor TI1 (Coix lacryma-jobi (Job's tears)).